A 72-amino-acid chain; its full sequence is Translation initiation factor IF-1 (72 aa).

The S1-like domain occupies 1 to 72 (MAKEEVLEFP…TKGRITYRFK (72 aa)).

It belongs to the IF-1 family. As to quaternary structure, component of the 30S ribosomal translation pre-initiation complex which assembles on the 30S ribosome in the order IF-2 and IF-3, IF-1 and N-formylmethionyl-tRNA(fMet); mRNA recruitment can occur at any time during PIC assembly.

It is found in the cytoplasm. Functionally, one of the essential components for the initiation of protein synthesis. Stabilizes the binding of IF-2 and IF-3 on the 30S subunit to which N-formylmethionyl-tRNA(fMet) subsequently binds. Helps modulate mRNA selection, yielding the 30S pre-initiation complex (PIC). Upon addition of the 50S ribosomal subunit IF-1, IF-2 and IF-3 are released leaving the mature 70S translation initiation complex. This Brucella abortus (strain 2308) protein is Translation initiation factor IF-1.